We begin with the raw amino-acid sequence, 402 residues long: Protein HAIKU1 (402 aa).

4 disordered regions span residues 1–44 (MDRP…LQTQ), 63–135 (TGSP…QQPM), 160–266 (SSLG…LVPS), and 346–402 (QPLT…WNDY). The span at 24–44 (LHQSTFAASTSNGAAPRLQTQ) shows a compositional bias: polar residues. Positions 55 to 64 (FRSIVQQLTG) match the VQ motif. The segment covering 76–87 (QNNSLRPQNTRL) has biased composition (polar residues). Residues 103-113 (VPLPSMAPPQS) are compositionally biased toward pro residues. A compositionally biased stretch (polar residues) spans 160–173 (SSLGDSGPNANQMQ). Over residues 218–240 (MPAQSQSQSQPQPQPQPQQHMMP) the composition is skewed to low complexity. A compositionally biased stretch (pro residues) spans 257 to 266 (YLPPPGLVPS). Residues 349–358 (TPNFSFSQIA) show a composition bias toward polar residues. The span at 371-380 (QGPPQPPPSP) shows a compositional bias: pro residues. Low complexity predominate over residues 381–390 (GLMFPLSPSG).

Interacts with WRKY10. Interacts with MPK6.

The protein resides in the nucleus. Functionally, modulates seed size by negatively regulating the cellularization of syncytial endosperm. May function by binding and modulating the activity of WRKY10 transcription factor. In Arabidopsis thaliana (Mouse-ear cress), this protein is Protein HAIKU1.